Here is a 694-residue protein sequence, read N- to C-terminus: Elongation factor G (694 aa).

A tr-type G domain is found at 8-287 (EDYRNFGIMA…AVVEFLPAPT (280 aa)). GTP-binding positions include 17–24 (AHIDAGKT), 86–90 (DTPGH), and 140–143 (NKMD).

The protein belongs to the TRAFAC class translation factor GTPase superfamily. Classic translation factor GTPase family. EF-G/EF-2 subfamily.

The protein localises to the cytoplasm. Catalyzes the GTP-dependent ribosomal translocation step during translation elongation. During this step, the ribosome changes from the pre-translocational (PRE) to the post-translocational (POST) state as the newly formed A-site-bound peptidyl-tRNA and P-site-bound deacylated tRNA move to the P and E sites, respectively. Catalyzes the coordinated movement of the two tRNA molecules, the mRNA and conformational changes in the ribosome. The sequence is that of Elongation factor G from Brucella canis (strain ATCC 23365 / NCTC 10854 / RM-666).